The primary structure comprises 599 residues: Sulfite reductase [NADPH] flavoprotein alpha-component (599 aa).

In terms of domain architecture, Flavodoxin-like spans 64 to 202 (ITLISASQTG…VAAQWRARIV (139 aa)). Residues 70–75 (SQTGNA), 117–120 (STQG), and 153–162 (LGDTSYEFFC) contribute to the FMN site. In terms of domain architecture, FAD-binding FR-type spans 234 to 448 (EAPLRASLSV…IEHNDNFRLP (215 aa)). FAD is bound by residues threonine 322, alanine 356, 386 to 389 (RLYS), 404 to 406 (TVG), tyrosine 410, and 419 to 422 (GGAS). NADP(+) contacts are provided by residues 519 to 520 (SR), 525 to 529 (KIYVQ), and aspartate 561. FAD is bound at residue tyrosine 599.

The protein belongs to the NADPH-dependent sulphite reductase flavoprotein subunit CysJ family. In the N-terminal section; belongs to the flavodoxin family. It in the C-terminal section; belongs to the flavoprotein pyridine nucleotide cytochrome reductase family. Alpha(8)-beta(8). The alpha component is a flavoprotein, the beta component is a hemoprotein. Requires FAD as cofactor. It depends on FMN as a cofactor.

The catalysed reaction is hydrogen sulfide + 3 NADP(+) + 3 H2O = sulfite + 3 NADPH + 4 H(+). It functions in the pathway sulfur metabolism; hydrogen sulfide biosynthesis; hydrogen sulfide from sulfite (NADPH route): step 1/1. Functionally, component of the sulfite reductase complex that catalyzes the 6-electron reduction of sulfite to sulfide. This is one of several activities required for the biosynthesis of L-cysteine from sulfate. The flavoprotein component catalyzes the electron flow from NADPH -&gt; FAD -&gt; FMN to the hemoprotein component. The protein is Sulfite reductase [NADPH] flavoprotein alpha-component of Salmonella arizonae (strain ATCC BAA-731 / CDC346-86 / RSK2980).